The sequence spans 140 residues: Fluoride-specific ion channel FluC 2 (140 aa).

The next 4 membrane-spanning stretches (helical) occupy residues 7–27 (VPPLDPAILLAISLGGGLGAL), 45–65 (WATFVVNVTGCFAIGVLMVLV), 77–97 (PFAGVGLLGGFTTFSTYGLEI), and 106–126 (VLEALGYLAGTVLAALAGVVL). G85 and T88 together coordinate Na(+).

Belongs to the fluoride channel Fluc/FEX (TC 1.A.43) family.

Its subcellular location is the cell membrane. It catalyses the reaction fluoride(in) = fluoride(out). With respect to regulation, na(+) is not transported, but it plays an essential structural role and its presence is essential for fluoride channel function. Fluoride-specific ion channel. Important for reducing fluoride concentration in the cell, thus reducing its toxicity. The sequence is that of Fluoride-specific ion channel FluC 2 from Nocardia farcinica (strain IFM 10152).